We begin with the raw amino-acid sequence, 399 residues long: Beta sliding clamp (399 aa).

Belongs to the beta sliding clamp family. As to quaternary structure, forms a ring-shaped head-to-tail homodimer around DNA which binds and tethers DNA polymerases and other proteins to the DNA. The DNA replisome complex has a single clamp-loading complex (3 tau and 1 each of delta, delta', psi and chi subunits) which binds 3 Pol III cores (1 core on the leading strand and 2 on the lagging strand) each with a beta sliding clamp dimer. Additional proteins in the replisome are other copies of gamma, psi and chi, Ssb, DNA helicase and RNA primase.

The protein resides in the cytoplasm. Functionally, confers DNA tethering and processivity to DNA polymerases and other proteins. Acts as a clamp, forming a ring around DNA (a reaction catalyzed by the clamp-loading complex) which diffuses in an ATP-independent manner freely and bidirectionally along dsDNA. Initially characterized for its ability to contact the catalytic subunit of DNA polymerase III (Pol III), a complex, multichain enzyme responsible for most of the replicative synthesis in bacteria; Pol III exhibits 3'-5' exonuclease proofreading activity. The beta chain is required for initiation of replication as well as for processivity of DNA replication. The chain is Beta sliding clamp (dnaN) from Mycobacterium leprae (strain TN).